Here is a 403-residue protein sequence, read N- to C-terminus: Succinoglycan biosynthesis protein ExoL (403 aa).

Its subcellular location is the cytoplasm. It functions in the pathway glycan metabolism; exopolysaccharide biosynthesis. In terms of biological role, essential for succinoglycan (EPS I) synthesis and nodule infection. Glycosyltransferase needed for the addition of the third sugar (glucose), catalyzes the formation of a beta-1,4 linkage between the second and third sugars. This is Succinoglycan biosynthesis protein ExoL (exoL) from Rhizobium meliloti (strain 1021) (Ensifer meliloti).